The sequence spans 692 residues: Elongation factor G (692 aa).

The tr-type G domain maps to 8-282 (AKTRNIGIMA…AVIAYLPSPL (275 aa)). GTP contacts are provided by residues 17 to 24 (AHVDAGKT), 81 to 85 (DTPGH), and 135 to 138 (NKMD).

The protein belongs to the TRAFAC class translation factor GTPase superfamily. Classic translation factor GTPase family. EF-G/EF-2 subfamily.

It localises to the cytoplasm. In terms of biological role, catalyzes the GTP-dependent ribosomal translocation step during translation elongation. During this step, the ribosome changes from the pre-translocational (PRE) to the post-translocational (POST) state as the newly formed A-site-bound peptidyl-tRNA and P-site-bound deacylated tRNA move to the P and E sites, respectively. Catalyzes the coordinated movement of the two tRNA molecules, the mRNA and conformational changes in the ribosome. This is Elongation factor G from Streptococcus equi subsp. equi (strain 4047).